We begin with the raw amino-acid sequence, 534 residues long: Peptide chain release factor 3 (534 aa).

A tr-type G domain is found at 9–278; the sequence is ARRRTFAIIS…FFVEHAPPPQ (270 aa). Residues 18 to 25, 86 to 90, and 140 to 143 contribute to the GTP site; these read SHPDAGKT, DTPGH, and NKLD.

Belongs to the TRAFAC class translation factor GTPase superfamily. Classic translation factor GTPase family. PrfC subfamily.

It localises to the cytoplasm. In terms of biological role, increases the formation of ribosomal termination complexes and stimulates activities of RF-1 and RF-2. It binds guanine nucleotides and has strong preference for UGA stop codons. It may interact directly with the ribosome. The stimulation of RF-1 and RF-2 is significantly reduced by GTP and GDP, but not by GMP. The sequence is that of Peptide chain release factor 3 from Xanthomonas axonopodis pv. citri (strain 306).